Here is a 226-residue protein sequence, read N- to C-terminus: Urease accessory protein UreG (226 aa).

The interval 1–26 is disordered; that stretch reads MPPHFLDGQPHGHTDRPRRVRQPGEP. GTP is bound at residue 33–40; it reads GPVGSGKT.

Belongs to the SIMIBI class G3E GTPase family. UreG subfamily. In terms of assembly, homodimer. UreD, UreF and UreG form a complex that acts as a GTP-hydrolysis-dependent molecular chaperone, activating the urease apoprotein by helping to assemble the nickel containing metallocenter of UreC. The UreE protein probably delivers the nickel.

Its subcellular location is the cytoplasm. Its function is as follows. Facilitates the functional incorporation of the urease nickel metallocenter. This process requires GTP hydrolysis, probably effectuated by UreG. This is Urease accessory protein UreG from Mycolicibacterium vanbaalenii (strain DSM 7251 / JCM 13017 / BCRC 16820 / KCTC 9966 / NRRL B-24157 / PYR-1) (Mycobacterium vanbaalenii).